Here is a 597-residue protein sequence, read N- to C-terminus: Arginine--tRNA ligase (597 aa).

Positions 125–135 match the 'HIGH' region motif; sequence PNTNKPLHLGH.

The protein belongs to the class-I aminoacyl-tRNA synthetase family. Monomer.

Its subcellular location is the cytoplasm. The enzyme catalyses tRNA(Arg) + L-arginine + ATP = L-arginyl-tRNA(Arg) + AMP + diphosphate. This chain is Arginine--tRNA ligase, found in Porphyromonas gingivalis (strain ATCC 33277 / DSM 20709 / CIP 103683 / JCM 12257 / NCTC 11834 / 2561).